A 487-amino-acid polypeptide reads, in one-letter code: N-succinylglutamate 5-semialdehyde dehydrogenase (487 aa).

221–226 (GSSRTG) contributes to the NAD(+) binding site. Residues E244 and C278 contribute to the active site.

This sequence belongs to the aldehyde dehydrogenase family. AstD subfamily.

The catalysed reaction is N-succinyl-L-glutamate 5-semialdehyde + NAD(+) + H2O = N-succinyl-L-glutamate + NADH + 2 H(+). The protein operates within amino-acid degradation; L-arginine degradation via AST pathway; L-glutamate and succinate from L-arginine: step 4/5. Its function is as follows. Catalyzes the NAD-dependent reduction of succinylglutamate semialdehyde into succinylglutamate. The chain is N-succinylglutamate 5-semialdehyde dehydrogenase from Pseudomonas putida (strain ATCC 47054 / DSM 6125 / CFBP 8728 / NCIMB 11950 / KT2440).